The chain runs to 289 residues: Phosphatidylglycerol--prolipoprotein diacylglyceryl transferase (289 aa).

Helical transmembrane passes span 21-41 (IGPL…LLGI), 53-73 (IDPN…IPAA), 95-115 (IWHG…ALIL), and 122-142 (IPIW…QAIG). Position 143 (Arg-143) interacts with a 1,2-diacyl-sn-glycero-3-phospho-(1'-sn-glycerol). A run of 3 helical transmembrane segments spans residues 182-202 (PTFL…IWLF), 215-235 (GVMT…IEGL), and 247-267 (IAQM…VWIY).

The protein belongs to the Lgt family.

Its subcellular location is the cell inner membrane. It catalyses the reaction L-cysteinyl-[prolipoprotein] + a 1,2-diacyl-sn-glycero-3-phospho-(1'-sn-glycerol) = an S-1,2-diacyl-sn-glyceryl-L-cysteinyl-[prolipoprotein] + sn-glycerol 1-phosphate + H(+). It functions in the pathway protein modification; lipoprotein biosynthesis (diacylglyceryl transfer). Functionally, catalyzes the transfer of the diacylglyceryl group from phosphatidylglycerol to the sulfhydryl group of the N-terminal cysteine of a prolipoprotein, the first step in the formation of mature lipoproteins. This Synechococcus elongatus (strain ATCC 33912 / PCC 7942 / FACHB-805) (Anacystis nidulans R2) protein is Phosphatidylglycerol--prolipoprotein diacylglyceryl transferase.